We begin with the raw amino-acid sequence, 768 residues long: Translation factor GUF1 homolog, mitochondrial (768 aa).

The N-terminal 29 residues, 1 to 29 (MRLWNRFSRLGNLLCACAACGCSFTPWRC), are a transit peptide targeting the mitochondrion. One can recognise a tr-type G domain in the interval 110 to 293 (SNIRNVAVVA…AIIERVPSPS (184 aa)). GTP-binding positions include 119–126 (AHVDHGKT), 184–188 (DTPGH), and 238–241 (TKMD).

Belongs to the TRAFAC class translation factor GTPase superfamily. Classic translation factor GTPase family. LepA subfamily.

The protein localises to the mitochondrion inner membrane. The enzyme catalyses GTP + H2O = GDP + phosphate + H(+). Promotes mitochondrial protein synthesis. May act as a fidelity factor of the translation reaction, by catalyzing a one-codon backward translocation of tRNAs on improperly translocated ribosomes. Binds to mitochondrial ribosomes in a GTP-dependent manner. The sequence is that of Translation factor GUF1 homolog, mitochondrial from Trypanosoma brucei brucei (strain 927/4 GUTat10.1).